The primary structure comprises 141 residues: Large ribosomal subunit protein uL11 (141 aa).

It belongs to the universal ribosomal protein uL11 family. In terms of assembly, part of the ribosomal stalk of the 50S ribosomal subunit. Interacts with L10 and the large rRNA to form the base of the stalk. L10 forms an elongated spine to which L12 dimers bind in a sequential fashion forming a multimeric L10(L12)X complex. Post-translationally, one or more lysine residues are methylated.

Forms part of the ribosomal stalk which helps the ribosome interact with GTP-bound translation factors. The protein is Large ribosomal subunit protein uL11 of Nostoc punctiforme (strain ATCC 29133 / PCC 73102).